The following is a 193-amino-acid chain: Acyl-homoserine-lactone synthase (193 aa).

The protein belongs to the autoinducer synthase family.

It catalyses the reaction a fatty acyl-[ACP] + S-adenosyl-L-methionine = an N-acyl-L-homoserine lactone + S-methyl-5'-thioadenosine + holo-[ACP] + H(+). Its function is as follows. Required for the synthesis of N-(3-oxodecanoyl)-L-homoserine lactone (ODHL), an autoinducer molecule which binds to VanR. In Vibrio anguillarum (Listonella anguillarum), this protein is Acyl-homoserine-lactone synthase (vanI).